The sequence spans 227 residues: Homeobox protein HD-10 (227 aa).

The homeobox DNA-binding region spans 30–89 (FVKHRKRTTKAQLKVLEETFETNIRPDANMRKKLGEQLGMTPRSVQVWFQNRRAKIKKLT). A disordered region spans residues 88–115 (LTQKKMMQQENTDNTKGPDAAHGSSSPK). A compositionally biased stretch (polar residues) spans 92–102 (KMMQQENTDNT).

It is found in the nucleus. The sequence is that of Homeobox protein HD-10 (HD-10) from Encephalitozoon cuniculi (strain GB-M1) (Microsporidian parasite).